The chain runs to 137 residues: Holo-[acyl-carrier-protein] synthase (137 aa).

2 residues coordinate Mg(2+): aspartate 8 and glutamate 57.

Belongs to the P-Pant transferase superfamily. AcpS family. The cofactor is Mg(2+).

It localises to the cytoplasm. The enzyme catalyses apo-[ACP] + CoA = holo-[ACP] + adenosine 3',5'-bisphosphate + H(+). In terms of biological role, transfers the 4'-phosphopantetheine moiety from coenzyme A to a Ser of acyl-carrier-protein. This chain is Holo-[acyl-carrier-protein] synthase, found in Hyphomonas neptunium (strain ATCC 15444).